The chain runs to 209 residues: MTAELEAQARTEKTRSFTHSLREKGMIPAVVYGKNVGSLSIAVDAGELQKILEGAGSNALIRMKIKENGKIRKHNVLVKEVQRDPVRRELIHADFHQVSLKDRVHATVPVHLTGSAAGTVEGGVLTPLLRRVEMECLASEIPEAITVDVSGLRIGDTITVADLPLPPGVRALEDPEAPVVTVTAGERPAAEPAAAPGAAPAAGPEEAEE.

The segment at 183–209 is disordered; it reads TAGERPAAEPAAAPGAAPAAGPEEAEE. Low complexity predominate over residues 184-209; sequence AGERPAAEPAAAPGAAPAAGPEEAEE.

The protein belongs to the bacterial ribosomal protein bL25 family. CTC subfamily. In terms of assembly, part of the 50S ribosomal subunit; part of the 5S rRNA/L5/L18/L25 subcomplex. Contacts the 5S rRNA. Binds to the 5S rRNA independently of L5 and L18.

This is one of the proteins that binds to the 5S RNA in the ribosome where it forms part of the central protuberance. This chain is Large ribosomal subunit protein bL25, found in Pelotomaculum thermopropionicum (strain DSM 13744 / JCM 10971 / SI).